The sequence spans 347 residues: Beta-hexosaminidase (347 aa).

Residues aspartate 64, arginine 72, arginine 138, and 168–169 each bind substrate; that span reads KH. The active-site Proton donor/acceptor is the histidine 181. Aspartate 251 acts as the Nucleophile in catalysis.

It belongs to the glycosyl hydrolase 3 family. NagZ subfamily.

Its subcellular location is the cytoplasm. The enzyme catalyses Hydrolysis of terminal non-reducing N-acetyl-D-hexosamine residues in N-acetyl-beta-D-hexosaminides.. The protein operates within cell wall biogenesis; peptidoglycan recycling. Functionally, plays a role in peptidoglycan recycling by cleaving the terminal beta-1,4-linked N-acetylglucosamine (GlcNAc) from peptide-linked peptidoglycan fragments, giving rise to free GlcNAc, anhydro-N-acetylmuramic acid and anhydro-N-acetylmuramic acid-linked peptides. This is Beta-hexosaminidase from Thioalkalivibrio sulfidiphilus (strain HL-EbGR7).